We begin with the raw amino-acid sequence, 376 residues long: MEKKDINIVNVNKSFDGVQILKDINLKIEQGEFFSIIGPSGCGKTTLLRMIAGFISPDSGAIYLGDENIVNLPPNLRNVNTIFQKYALFPHLNVFENVAFPLRLKKVDEKTINEEVNKYLKLVGLEEHSTKKVSQLSGGQQQRISIARALINKPGVLLLDEPLSALDAKLRQNLLIELDLIHDEVGITFIFITHDQQEALSISDRIAVMNAGKVLQVGTPAEVYEAPADTFVADFLGENNFFSGKVTEIINEELAKINLEGIGEIIIELDKKVKIGDKVTISLRPEKIKLSKNEIKKTKNYMNSAAVYVDEYIYSGFQSKYYVHLKNNEKLKFKIFMQHAAFFDDNDEKAIWWDEDAYITWDAYDGYLVEVESEKK.

Residues 6-236 (INIVNVNKSF…PADTFVADFL (231 aa)) form the ABC transporter domain. Position 38–45 (38–45 (GPSGCGKT)) interacts with ATP.

The protein belongs to the ABC transporter superfamily. Spermidine/putrescine importer (TC 3.A.1.11.1) family. As to quaternary structure, the complex is composed of two ATP-binding proteins (PotA), two transmembrane proteins (PotB and PotC) and a solute-binding protein (PotD).

The protein localises to the cell inner membrane. It catalyses the reaction ATP + H2O + polyamine-[polyamine-binding protein]Side 1 = ADP + phosphate + polyamineSide 2 + [polyamine-binding protein]Side 1.. Part of the ABC transporter complex PotABCD involved in spermidine/putrescine import. Responsible for energy coupling to the transport system. This Fusobacterium nucleatum subsp. nucleatum (strain ATCC 25586 / DSM 15643 / BCRC 10681 / CIP 101130 / JCM 8532 / KCTC 2640 / LMG 13131 / VPI 4355) protein is Spermidine/putrescine import ATP-binding protein PotA.